The sequence spans 294 residues: N-acetylmuramic acid 6-phosphate etherase (294 aa).

In terms of domain architecture, SIS spans 54 to 217; that stretch reads TIHSFKSNGR…STASMIGVGK (164 aa). The active-site Proton donor is the Glu82. Residue Glu113 is part of the active site.

This sequence belongs to the GCKR-like family. MurNAc-6-P etherase subfamily. As to quaternary structure, homodimer.

The enzyme catalyses N-acetyl-D-muramate 6-phosphate + H2O = N-acetyl-D-glucosamine 6-phosphate + (R)-lactate. It participates in amino-sugar metabolism; N-acetylmuramate degradation. Specifically catalyzes the cleavage of the D-lactyl ether substituent of MurNAc 6-phosphate, producing GlcNAc 6-phosphate and D-lactate. The chain is N-acetylmuramic acid 6-phosphate etherase from Oceanobacillus iheyensis (strain DSM 14371 / CIP 107618 / JCM 11309 / KCTC 3954 / HTE831).